The sequence spans 196 residues: Adenine phosphoribosyltransferase (196 aa).

It belongs to the purine/pyrimidine phosphoribosyltransferase family. In terms of assembly, homodimer.

It localises to the cytoplasm. The enzyme catalyses AMP + diphosphate = 5-phospho-alpha-D-ribose 1-diphosphate + adenine. It participates in purine metabolism; AMP biosynthesis via salvage pathway; AMP from adenine: step 1/1. Functionally, catalyzes a salvage reaction resulting in the formation of AMP, that is energically less costly than de novo synthesis. The protein is Adenine phosphoribosyltransferase of Methylibium petroleiphilum (strain ATCC BAA-1232 / LMG 22953 / PM1).